We begin with the raw amino-acid sequence, 418 residues long: MTLLALGINHKTAPVALRERVTFSPDTLDQALDSLLAQPMVQGGVVLSTCNRTELYLSVEEQDNLHEALIRWLCEYHNLNEEELRTSVYWHQDNDAVSHLMRVASGLDSLVLGEPQILGQVKKAFADSQKGHLKASELERMFQKSFSVAKRVRTETDIGASAVSVAFAACTLARQIFESLSTVTVLLVGAGETIELVARHLREHKVKHMIIANRTRERAQVLADEVGAEVIALSDIDERLKDADIIISSTASPLPIIGKGMVERALKSRRNQPMLLVDIAVPRDVEPEVGKLANAYLYSVDDLQSIISHNLAQRKAAAVQAETIVEQESGEFMAWLRAQSASETIREYRGQAEQVRDDLTAKAMAALEQGGDPQVIMQDLAWKLTNRLIHAPTKSLQQAARNGDDERLTILRNSLGLE.

Residues 49–52 (TCNR), Ser109, 114–116 (EPQ), and Gln120 contribute to the substrate site. Catalysis depends on Cys50, which acts as the Nucleophile. Residue 189–194 (GAGETI) coordinates NADP(+).

This sequence belongs to the glutamyl-tRNA reductase family. Homodimer.

The enzyme catalyses (S)-4-amino-5-oxopentanoate + tRNA(Glu) + NADP(+) = L-glutamyl-tRNA(Glu) + NADPH + H(+). It participates in porphyrin-containing compound metabolism; protoporphyrin-IX biosynthesis; 5-aminolevulinate from L-glutamyl-tRNA(Glu): step 1/2. Its function is as follows. Catalyzes the NADPH-dependent reduction of glutamyl-tRNA(Glu) to glutamate 1-semialdehyde (GSA). The chain is Glutamyl-tRNA reductase from Enterobacter sp. (strain 638).